Reading from the N-terminus, the 159-residue chain is Large ribosomal subunit protein uL15 (159 aa).

The segment at 1 to 46 (MKLNELSPSVPKKNRKRIGRGNSSGWGKTAGKGSNGQNSRAGGGVK) is disordered. Over residues 22-34 (NSSGWGKTAGKGS) the composition is skewed to gly residues.

It belongs to the universal ribosomal protein uL15 family. Part of the 50S ribosomal subunit.

In terms of biological role, binds to the 23S rRNA. The chain is Large ribosomal subunit protein uL15 from Fusobacterium nucleatum subsp. nucleatum (strain ATCC 25586 / DSM 15643 / BCRC 10681 / CIP 101130 / JCM 8532 / KCTC 2640 / LMG 13131 / VPI 4355).